We begin with the raw amino-acid sequence, 94 residues long: Conotoxin Cal22a (94 aa).

The signal sequence occupies residues 1–24; the sequence is MMSTKGITLFLCLLLLALATSVNG. A propeptide spanning residues 25-44 is cleaved from the precursor; that stretch reads GQGTRRSRMTRALHGGRPSA.

Contains 4 disulfide bonds. As to expression, expressed by the venom duct.

It is found in the secreted. Probable neurotoxin with unknown target. Possibly targets ion channels. This chain is Conotoxin Cal22a, found in Californiconus californicus (California cone).